Consider the following 491-residue polypeptide: ATP synthase subunit beta, chloroplastic (491 aa).

ATP is bound at residue 163–170; that stretch reads GGAGVGKT.

It belongs to the ATPase alpha/beta chains family. In terms of assembly, F-type ATPases have 2 components, CF(1) - the catalytic core - and CF(0) - the membrane proton channel. CF(1) has five subunits: alpha(3), beta(3), gamma(1), delta(1), epsilon(1). CF(0) has four main subunits: a(1), b(1), b'(1) and c(9-12).

The protein resides in the plastid. Its subcellular location is the chloroplast thylakoid membrane. It carries out the reaction ATP + H2O + 4 H(+)(in) = ADP + phosphate + 5 H(+)(out). Produces ATP from ADP in the presence of a proton gradient across the membrane. The catalytic sites are hosted primarily by the beta subunits. This Nephroselmis olivacea (Green alga) protein is ATP synthase subunit beta, chloroplastic.